The following is a 47-amino-acid chain: MPRLTAKDFPQELLDYYDYYAHGKISKREFLNLAAKCGRRDDGISVV.

This chain is Protein YqhI, found in Escherichia coli (strain K12).